A 685-amino-acid chain; its full sequence is Putative pentatricopeptide repeat-containing protein At3g08820 (685 aa).

12 PPR repeats span residues 75–109 (NIFL…GLYL), 110–144 (HGFT…GFNH), 145–175 (DVAA…IPDR), 176–210 (SVVT…GVKP), 211–245 (DSYF…EMQK), 246–276 (NSFV…MVEK), 277–311 (DIVT…NLKP), 312–346 (DQFS…EFLT), 347–381 (NLFM…DIVI), 383–412 (NAAI…GISP), 413–443 (DGST…ISCV), and 449–479 (TVEH…MPMR). The tract at residues 484–559 (VWGALLSGCR…IPGYSWIELE (76 aa)) is type E motif. The tract at residues 560–590 (GKVHEFLADDKSHPLSDKIYAKLEDLGNEMR) is type E(+) motif. The type DYW motif stretch occupies residues 591–685 (LMGFVPTTEF…NGSCSCNDYW (95 aa)).

The protein belongs to the PPR family. PCMP-H subfamily.

The protein is Putative pentatricopeptide repeat-containing protein At3g08820 (PCMP-H84) of Arabidopsis thaliana (Mouse-ear cress).